The chain runs to 261 residues: tRNA U34 carboxymethyltransferase (261 aa).

Carboxy-S-adenosyl-L-methionine-binding positions include Lys25, Trp39, Lys44, Gly63, 114 to 115 (VE), Tyr135, and Arg250.

Belongs to the class I-like SAM-binding methyltransferase superfamily. CmoB family. In terms of assembly, homotetramer.

It carries out the reaction carboxy-S-adenosyl-L-methionine + 5-hydroxyuridine(34) in tRNA = 5-carboxymethoxyuridine(34) in tRNA + S-adenosyl-L-homocysteine + H(+). Functionally, catalyzes carboxymethyl transfer from carboxy-S-adenosyl-L-methionine (Cx-SAM) to 5-hydroxyuridine (ho5U) to form 5-carboxymethoxyuridine (cmo5U) at position 34 in tRNAs. The sequence is that of tRNA U34 carboxymethyltransferase from Helicobacter pylori (strain ATCC 700392 / 26695) (Campylobacter pylori).